Here is a 1100-residue protein sequence, read N- to C-terminus: Exportin-T (1100 aa).

The protein belongs to the exportin family. In terms of assembly, interacts with GSP1, GSP2, NSP1, NUP2 and UTP8.

It is found in the nucleus. It localises to the cytoplasm. Functionally, tRNA nucleus export receptor which facilitates tRNA translocation across the nuclear pore complex. Preferentially interacts with tRNAs with mature 5'- and 3'-termini and does not distinguish between intron-containing and spliced tRNAs. In the nucleus binds to tRNA and to the Ran-GTPases GSP1 or GSP2 in their active GTP-bound form. Docking of this trimeric complex to the nuclear pore complex (NPC) is mediated through binding to nucleoporins. Upon transit of a nuclear export complex into the cytoplasm, disassembling of the complex and hydrolysis of Ran-GTP to Ran-GDP cause release of the tRNA from the export receptor. The directionality of nuclear export is thought to be conferred by an asymmetric distribution of the GTP- and GDP-bound forms of Ran between the cytoplasm and nucleus. Involved in pre-tRNA splicing, probably by affecting the interaction of pre-tRNA with splicing endonuclease. The chain is Exportin-T (LOS1) from Saccharomyces cerevisiae (strain YJM789) (Baker's yeast).